Reading from the N-terminus, the 664-residue chain is Cyclic nucleotide-gated channel alpha-2 (664 aa).

Residues 1 to 11 (MTEKTNGVKSS) are compositionally biased toward polar residues. The tract at residues 1–49 (MTEKTNGVKSSPANNHNHHAPPAIKANGKDDHRTSSRPHSAADDDTSSE) is disordered. Residues 1-144 (MTEKTNGVKS…PAGDWYYCWL (144 aa)) are Cytoplasmic-facing. Over residues 12–23 (PANNHNHHAPPA) the composition is skewed to low complexity. A helical membrane pass occupies residues 145–166 (FVIAMPVLYNWCLLVARACFSD). The Extracellular segment spans residues 167 to 176 (LQKGYYLVWL). The helical transmembrane segment at 177-197 (VLDYVSDVVYIADLFIRLRTG) threads the bilayer. Topologically, residues 198–222 (FLEQGLLVKDTKKLRDNYIHTLQFK) are cytoplasmic. Residues 223-241 (LDVASIIPTDLIYFAVDIH) traverse the membrane as a helical segment. The Extracellular portion of the chain corresponds to 242–246 (SPEVR). A helical transmembrane segment spans residues 247–265 (FNRLLHFARMFEFFDRTET). The Cytoplasmic portion of the chain corresponds to 266–272 (RTNYPNI). An ion conduction pathway region spans residues 270 to 378 (PNIFRISNLV…GNVGSMISNM (109 aa)). A helical transmembrane segment spans residues 273–296 (FRISNLVLYILVIIHWNACIYYAI). The Extracellular portion of the chain corresponds to 297–319 (SKSIGFGVDTWVYPNITDPEYGY). The next 2 membrane-spanning stretches (helical) occupy residues 320–354 (LARE…LFVI) and 355–379 (FDFL…SNMN). Residues 337-340 (TIGE) are selectivity filter. The segment at 380 to 456 (ATRAEFQAKI…STLKKVRIFH (77 aa)) is C-linker. Residues 380–664 (ATRAEFQAKI…SPELAAADEP (285 aa)) are Cytoplasmic-facing. Positions 460-580 (AGLLVELVLK…EERGREILMK (121 aa)) are cyclic nucleotide-binding domain. 3',5'-cyclic GMP is bound by residues Gly-520, Ser-523, Arg-536, and Thr-537. The 3',5'-cyclic AMP site is built by Arg-536 and Thr-537. Residues 597–651 (VQEKLGQLETNMETLYTRFGRLLAEYTGAQQKLKQRITVLETKMKQNNEDDYLSD) adopt a coiled-coil conformation. Residues 641-664 (KQNNEDDYLSDGMNSPELAAADEP) are disordered.

The protein belongs to the cyclic nucleotide-gated cation channel (TC 1.A.1.5) family. CNGA2 subfamily. The olfactory cyclic nucleotide-gated channel is an heterotetramer composed of CNGA2, CNGA4 and CNGB1b subunits with 2:1:1 stoichiometry.

It is found in the cell projection. The protein localises to the cilium membrane. It carries out the reaction Ca(2+)(in) = Ca(2+)(out). The catalysed reaction is Na(+)(in) = Na(+)(out). It catalyses the reaction K(+)(in) = K(+)(out). The enzyme catalyses NH4(+)(in) = NH4(+)(out). It carries out the reaction Rb(+)(in) = Rb(+)(out). The catalysed reaction is Li(+)(in) = Li(+)(out). It catalyses the reaction Cs(+)(in) = Cs(+)(out). In terms of biological role, pore-forming subunit of the olfactory cyclic nucleotide-gated channel. Operates in the cilia of olfactory sensory neurons where chemical stimulation of the odorant is converted to an electrical signal. Mediates odorant-induced cAMP-dependent Ca(2+) influx triggering neuron depolarization. The rise of intracellular Ca(2+) levels potentiates the olfactory response by activating Ca(2+)-dependent Cl(-) channels, but it also serves as a negative feedback signal to desensitize the channel for rapid adaptation to odorants. Conducts cAMP- and cGMP-gated ion currents, with permeability for monovalent and divalent cations. The protein is Cyclic nucleotide-gated channel alpha-2 of Homo sapiens (Human).